The following is a 249-amino-acid chain: Anamorsin homolog (249 aa).

The segment at 1–130 (MEQFKDLQKS…ETGSAARLSF (130 aa)) is N-terminal SAM-like domain. The tract at residues 131 to 161 (AKKAAGVNVWKISGDDEELIDEEDLLDEADK) is linker. [2Fe-2S] cluster is bound by residues Cys172, Cys181, Cys184, and Cys186. The segment at 172–186 (CSTTGKRKACKNCSC) is fe-S binding site A. Residues Cys210, Cys213, Cys221, and Cys224 each contribute to the [4Fe-4S] cluster site. Short sequence motifs (cx2C motif) lie at residues 210–213 (CGNC) and 221–224 (CSTC). The tract at residues 210 to 224 (CGNCYLGDAFRCSTC) is fe-S binding site B.

This sequence belongs to the anamorsin family. In terms of assembly, monomer. The cofactor is [2Fe-2S] cluster. [4Fe-4S] cluster is required as a cofactor.

It localises to the cytoplasm. Its subcellular location is the mitochondrion intermembrane space. In terms of biological role, component of the cytosolic iron-sulfur (Fe-S) protein assembly (CIA) machinery. Required for the maturation of extramitochondrial Fe-S proteins. Part of an electron transfer chain functioning in an early step of cytosolic Fe-S biogenesis, facilitating the de novo assembly of a [4Fe-4S] cluster on the cytosolic Fe-S scaffold complex. Electrons are transferred from NADPH via a FAD- and FMN-containing diflavin oxidoreductase. Together with the diflavin oxidoreductase, also required for the assembly of the diferric tyrosyl radical cofactor of ribonucleotide reductase (RNR), probably by providing electrons for reduction during radical cofactor maturation in the catalytic small subunit. This chain is Anamorsin homolog, found in Drosophila grimshawi (Hawaiian fruit fly).